The primary structure comprises 361 residues: MSNQDLINCKSNSGLTYAKAGVDIDVGNAMVEKIKPFIRSTKRAGADVEIGGFGGLFDLKAAGFTDPILVAANDGVGTKLKIAIEVGIHDTVGIDLVAMCINDLLVQGAEPLFFLDYFATGKLDPEQGAAIVSGIAVGCQQAGAALIGGETAEMPGMYAKGDYDLAGFAVGATERSALLPSKDLAEGDIILGLSSSGIHSNGFSLVRRIVQQSGLKWGDYAPFNPQMNLGTALLTPTRIYVKSLLPIIKTYKGIKALAHITGGGLPENIPRVLPSSLCAEINLSAIHVPPVFSWIAKQGKIEETEMLRTFNCGIGMVIIVAQHAVETITQILEMQGEIVTLLGILTKHPTKKILYKGVLHL.

The protein belongs to the AIR synthase family.

The protein resides in the cytoplasm. The catalysed reaction is 2-formamido-N(1)-(5-O-phospho-beta-D-ribosyl)acetamidine + ATP = 5-amino-1-(5-phospho-beta-D-ribosyl)imidazole + ADP + phosphate + H(+). Its pathway is purine metabolism; IMP biosynthesis via de novo pathway; 5-amino-1-(5-phospho-D-ribosyl)imidazole from N(2)-formyl-N(1)-(5-phospho-D-ribosyl)glycinamide: step 2/2. This is Phosphoribosylformylglycinamidine cyclo-ligase from Bartonella quintana (strain Toulouse) (Rochalimaea quintana).